The following is a 684-amino-acid chain: G-protein-signaling modulator 2 (684 aa).

The interval 22–357 (ASCLELALEG…HLEISREVGD (336 aa)) is important for interaction with NUMA1; INSC and FRMPD1. TPR repeat units follow at residues 24–57 (CLEL…GTED), 62–95 (SAIY…ARTI), 102–135 (AKAS…SREL), 142–184 (ARAL…AVDF), 202–235 (GRAF…AKEF), 242–275 (RRAY…ARQL), 282–315 (AQSC…AQEL), and 322–355 (GRAC…SREV). Serine 132 carries the phosphoserine; by PKG modification. The residue at position 352 (serine 352) is a Phosphoserine; by PKG. Serine 408 and serine 483 each carry phosphoserine. Residue threonine 486 is modified to Phosphothreonine. The GoLoco 1 domain occupies 489 to 511 (DEGFFDLLSRFQSNRMDDQRCCL). Serine 501 bears the Phosphoserine; by PKC mark. 2 positions are modified to phosphoserine: serine 541 and serine 565. 3 consecutive GoLoco domains span residues 544-566 (TDEF…RASF), 594-616 (DEDF…RCAP), and 628-650 (DEDF…RVLL). Serine 607 carries the post-translational modification Phosphoserine; by PKG. Positions 608, 613, 642, and 647 each coordinate GDP.

It belongs to the GPSM family. As to quaternary structure, interacts with the dynein-dynactin complex; this interaction is inhibited in a PLK1-dependent manner. Part of a spindle orientation complex at least composed of GNAI1, GPSM2 and NUMA1. Interacts with LLGL2. Interacts (via TPR repeat region) with INSC/inscuteable. Interacts (via TPR repeat region) with NUMA1 (via C-terminus); this interaction is direct, inhibited in a PLK1-dependent manner, prevents the binding of NUMA1 with SPAG5 and promotes spindle pole organization. INSC and NUMA1 compete for the same binding site, but INSC has higher affinity and can displace NUMA1 (in vitro). Interacts with GNAI2. Interacts (via GoLoco domains) with the GDP-bound form of GNAI1 and GNAI3; has much lower affinity for the GTP-bound form. Interaction with GDP-bound GNAI3 strongly enhances the affinity for NUMA1. Interacts (via TPR repeat region) with FRMPD1. INSC and FRMPD1 compete for the same binding site, but INSC has higher affinity and can displace FRMPD1 (in vitro). Interacts (via TPR repeat region) with FRMPD4. Identified in a complex with INSC and F2RL2/Par3. Interacts with TASOR. As to expression, ubiquitously expressed.

The protein resides in the cytoplasm. It is found in the cell cortex. It localises to the cytoskeleton. The protein localises to the spindle pole. Its subcellular location is the lateral cell membrane. In terms of biological role, plays an important role in mitotic spindle pole organization via its interaction with NUMA1. Required for cortical dynein-dynactin complex recruitment during metaphase. Plays a role in metaphase spindle orientation. Also plays an important role in asymmetric cell divisions. Has guanine nucleotide dissociation inhibitor (GDI) activity towards G(i) alpha proteins, such as GNAI1 and GNAI3, and thereby regulates their activity. The sequence is that of G-protein-signaling modulator 2 (GPSM2) from Homo sapiens (Human).